Reading from the N-terminus, the 416-residue chain is Gamma-glutamyl phosphate reductase (416 aa).

This sequence belongs to the gamma-glutamyl phosphate reductase family.

It is found in the cytoplasm. The enzyme catalyses L-glutamate 5-semialdehyde + phosphate + NADP(+) = L-glutamyl 5-phosphate + NADPH + H(+). It participates in amino-acid biosynthesis; L-proline biosynthesis; L-glutamate 5-semialdehyde from L-glutamate: step 2/2. Its function is as follows. Catalyzes the NADPH-dependent reduction of L-glutamate 5-phosphate into L-glutamate 5-semialdehyde and phosphate. The product spontaneously undergoes cyclization to form 1-pyrroline-5-carboxylate. This chain is Gamma-glutamyl phosphate reductase, found in Leptospira interrogans serogroup Icterohaemorrhagiae serovar copenhageni (strain Fiocruz L1-130).